The following is a 392-amino-acid chain: Formate-dependent phosphoribosylglycinamide formyltransferase (392 aa).

N(1)-(5-phospho-beta-D-ribosyl)glycinamide is bound by residues 20–21 (EL) and glutamate 80. Residues arginine 112, lysine 153, 158-163 (SSGKGQ), 193-196 (EGFI), and glutamate 201 contribute to the ATP site. The ATP-grasp domain maps to 117–306 (RLAAETLALP…EFALHVRAIL (190 aa)). 2 residues coordinate Mg(2+): glutamate 265 and glutamate 277. N(1)-(5-phospho-beta-D-ribosyl)glycinamide contacts are provided by residues aspartate 284, lysine 354, and 361 to 362 (RR).

The protein belongs to the PurK/PurT family. In terms of assembly, homodimer.

The catalysed reaction is N(1)-(5-phospho-beta-D-ribosyl)glycinamide + formate + ATP = N(2)-formyl-N(1)-(5-phospho-beta-D-ribosyl)glycinamide + ADP + phosphate + H(+). It functions in the pathway purine metabolism; IMP biosynthesis via de novo pathway; N(2)-formyl-N(1)-(5-phospho-D-ribosyl)glycinamide from N(1)-(5-phospho-D-ribosyl)glycinamide (formate route): step 1/1. Functionally, involved in the de novo purine biosynthesis. Catalyzes the transfer of formate to 5-phospho-ribosyl-glycinamide (GAR), producing 5-phospho-ribosyl-N-formylglycinamide (FGAR). Formate is provided by PurU via hydrolysis of 10-formyl-tetrahydrofolate. This chain is Formate-dependent phosphoribosylglycinamide formyltransferase, found in Shewanella amazonensis (strain ATCC BAA-1098 / SB2B).